The chain runs to 580 residues: Serine/threonine-protein kinase PINK1, mitochondrial (580 aa).

Residues 1-77 (MAVRQALGRG…RFFRQSVAGL (77 aa)) constitute a mitochondrion transit peptide. The tract at residues 28-60 (VSGWGKPGPGAAWGRGERPGRVSSPGAQPRPLG) is disordered. Residues 94 to 110 (GPCGRAVFLAFGLGLGL) traverse the membrane as a helical segment. The interval 111–117 (IEEKQAE) is required for outer membrane localization. Residues 156–510 (YLIGQAIGKG…IAANVLHLSL (355 aa)) enclose the Protein kinase domain. ATP is bound by residues 162 to 170 (IGKGCNAAV) and Lys-218. Ser-227 bears the Phosphoserine; by autocatalysis mark. The Proton acceptor role is filled by Asp-361. At Ser-401 the chain carries Phosphoserine; by autocatalysis.

The protein belongs to the protein kinase superfamily. Ser/Thr protein kinase family. Upon mitochondrial depolarization, it forms a supercomplex with TOM and TIM23 complexes. PINK1-TOM-TIM23 supercomplex formation requires PINK1 interaction with TOMM20 and TOMM70 and is critical for PINK1 stabilization at the outer mitochondrial membrane, kinase activation and downstream mitophagy. Upon mitochondrial depolarization, interacts with TIMM23; the interaction is required for PINK1 accumulation at the outer mitochondrial membrane, kinase activation by autophosphorylation and PRKN recruitement to mitochondria. Interacts with PRKN. Interacts with FBXO7. Forms a complex with PRKN and PARK7. Interacts with NENF. The cofactor is Mg(2+). In terms of processing, proteolytically cleaved. In healthy cells, the precursor is continuously imported into the inner mitochondrial membrane (IMM), where it is proteolytically cleaved by mitochondrial-processing peptidase (MPP) and then undergoes further proteolytic cleavage by PARL or AFG3L2 to give rise to the 52 kDa short form. The 52 kDa short form is then released into the cytosol where it rapidly undergoes proteasome-dependent degradation. In unhealthy cells, when cellular stress conditions lead to the loss of mitochondrial membrane potential, mitochondrial import is impaired leading to the precursor accumulating on the outer mitochondrial membrane (OMM). If accumulation at the OMM fails and it is imported into the depolarized mitochondria, it undergoes cleavage by the IMM protease OMA1, promoting its subsequent degradation by the proteasome. Autophosphorylated. Loss of mitochondrial membrane potential results in the precursor accumulating on the outer mitochondrial membrane (OMM) where it is activated by autophosphorylation. Autophosphorylation at Ser-227 and Ser-401 is sufficient and essential for selective recruitment of PRKN to depolarized mitochondria, via PINK1-dependent phosphorylation of ubiquitin and maybe PRKN.

The protein localises to the mitochondrion outer membrane. It localises to the mitochondrion inner membrane. It is found in the cytoplasm. Its subcellular location is the cytosol. The enzyme catalyses L-seryl-[protein] + ATP = O-phospho-L-seryl-[protein] + ADP + H(+). It catalyses the reaction L-threonyl-[protein] + ATP = O-phospho-L-threonyl-[protein] + ADP + H(+). Its function is as follows. Serine/threonine-protein kinase which acts as a sensor of mitochondrial damage and protects against mitochondrial dysfunction during cellular stress. It phosphorylates mitochondrial proteins to coordinate mitochondrial quality control mechanisms that remove and replace dysfunctional mitochondrial components. Depending on the severity of mitochondrial damage, activity ranges from preventing apoptosis and stimulating mitochondrial biogenesis to eliminating severely damaged mitochondria via PINK1-PRKN-dependent mitophagy. When cellular stress results in irreversible mitochondrial damage, PINK1 accumulates at the outer mitochondrial membrane (OMM) where it phosphorylates pre-existing polyubiquitin chains at 'Ser-65', recruits PRKN from the cytosol to the OMM and activates PRKN by phosphorylation at 'Ser-65'; activated PRKN then ubiquinates VDAC1 and other OMM proteins to initiate mitophagy. The PINK1-PRKN pathway also promotes fission of damaged mitochondria through phosphorylation and PRKN-dependent degradation of mitochondrial proteins involved in fission such as MFN2. This prevents the refusion of unhealthy mitochondria with the mitochondrial network or initiates mitochondrial fragmentation facilitating their later engulfment by autophagosomes. Also promotes mitochondrial fission independently of PRKN and ATG7-mediated mitophagy, via the phosphorylation and activation of DNM1L. Regulates motility of damaged mitochondria by promoting the ubiquitination and subsequent degradation of MIRO1 and MIRO2; in motor neurons, this likely inhibits mitochondrial intracellular anterograde transport along the axons which probably increases the chance of the mitochondria undergoing mitophagy in the soma. Required for ubiquinone reduction by mitochondrial complex I by mediating phosphorylation of complex I subunit NDUFA10. Phosphorylates LETM1, positively regulating its mitochondrial calcium transport activity. The polypeptide is Serine/threonine-protein kinase PINK1, mitochondrial (Rattus norvegicus (Rat)).